Reading from the N-terminus, the 204-residue chain is Small ribosomal subunit protein uS4 (204 aa).

Residues 21–45 (GRPKSPINKREYGPGQHGQRRKKPS) are disordered. The S4 RNA-binding domain maps to 93 to 156 (RRLDAVVYRM…KQLAMVLDSV (64 aa)).

This sequence belongs to the universal ribosomal protein uS4 family. As to quaternary structure, part of the 30S ribosomal subunit. Contacts protein S5. The interaction surface between S4 and S5 is involved in control of translational fidelity.

Its function is as follows. One of the primary rRNA binding proteins, it binds directly to 16S rRNA where it nucleates assembly of the body of the 30S subunit. In terms of biological role, with S5 and S12 plays an important role in translational accuracy. This chain is Small ribosomal subunit protein uS4, found in Acidiphilium cryptum (strain JF-5).